Reading from the N-terminus, the 686-residue chain is Acyl-CoA synthetase short-chain family member 3, mitochondrial (686 aa).

The transit peptide at 1 to 29 (MKPSWLQCRKVTSAGGLGGPLPGSSPARG) directs the protein to the mitochondrion. A CoA-binding site is contributed by 227 to 230 (EPGR). ATP is bound by residues 425 to 427 (GER) and 446 to 451 (DHWWQT). K518 is subject to N6-succinyllysine. K524 bears the N6-acetyllysine mark. Positions 539, 554, and 565 each coordinate ATP. A CoA-binding site is contributed by R624.

The protein belongs to the ATP-dependent AMP-binding enzyme family.

It is found in the mitochondrion matrix. It carries out the reaction acetate + ATP + CoA = acetyl-CoA + AMP + diphosphate. The enzyme catalyses propanoate + ATP + CoA = propanoyl-CoA + AMP + diphosphate. It catalyses the reaction butanoate + ATP + CoA = butanoyl-CoA + AMP + diphosphate. Catalyzes the synthesis of acetyl-CoA from short-chain fatty acids. Propionate is the preferred substrate. Can utilize acetate and butyrate with a much lower affinity. The sequence is that of Acyl-CoA synthetase short-chain family member 3, mitochondrial (ACSS3) from Homo sapiens (Human).